The sequence spans 435 residues: Protein lin-54 (435 aa).

The disordered stretch occupies residues Asp-73–Pro-136. The span at Thr-102–Pro-120 shows a compositional bias: polar residues. A CRC domain is found at Gln-173 to Thr-288. Positions Lys-175–Tyr-188 are DNA-binding. Residues Cys-177, Cys-179, Cys-184, Cys-189, Cys-191, Cys-198, Cys-201, Cys-203, and Cys-206 each coordinate Zn(2+). The interval Ile-235–Gln-250 is linker. Positions 253, 255, 260, 265, 267, 274, 278, 280, and 283 each coordinate Zn(2+). Residues Cys-253–Glu-266 form a DNA-binding region. Residues Leu-415–Ser-435 are disordered.

It belongs to the lin-54 family. In terms of assembly, component of the DRM complex, at least composed of lin-9, lin-35, lin-37, lin-52, lin-53, lin-54- dpl-1 and efl-1.

It is found in the nucleus. The protein localises to the chromosome. In terms of biological role, synthetic multivulva class B (synMuvB) protein. SynMuvB proteins are required to repress the induction of vulval development by Ras signaling and probably act by forming the multiprotein DRM complex that repress transcription. The polypeptide is Protein lin-54 (Caenorhabditis elegans).